We begin with the raw amino-acid sequence, 573 residues long: Proline--tRNA ligase (573 aa).

The protein belongs to the class-II aminoacyl-tRNA synthetase family. ProS type 1 subfamily. Homodimer.

The protein localises to the cytoplasm. It carries out the reaction tRNA(Pro) + L-proline + ATP = L-prolyl-tRNA(Pro) + AMP + diphosphate. Its function is as follows. Catalyzes the attachment of proline to tRNA(Pro) in a two-step reaction: proline is first activated by ATP to form Pro-AMP and then transferred to the acceptor end of tRNA(Pro). As ProRS can inadvertently accommodate and process non-cognate amino acids such as alanine and cysteine, to avoid such errors it has two additional distinct editing activities against alanine. One activity is designated as 'pretransfer' editing and involves the tRNA(Pro)-independent hydrolysis of activated Ala-AMP. The other activity is designated 'posttransfer' editing and involves deacylation of mischarged Ala-tRNA(Pro). The misacylated Cys-tRNA(Pro) is not edited by ProRS. This Limosilactobacillus fermentum (strain NBRC 3956 / LMG 18251) (Lactobacillus fermentum) protein is Proline--tRNA ligase.